Here is a 94-residue protein sequence, read N- to C-terminus: Phosphoribosyl-ATP pyrophosphatase (94 aa).

This sequence belongs to the PRA-PH family.

The protein localises to the cytoplasm. It catalyses the reaction 1-(5-phospho-beta-D-ribosyl)-ATP + H2O = 1-(5-phospho-beta-D-ribosyl)-5'-AMP + diphosphate + H(+). It functions in the pathway amino-acid biosynthesis; L-histidine biosynthesis; L-histidine from 5-phospho-alpha-D-ribose 1-diphosphate: step 2/9. The protein is Phosphoribosyl-ATP pyrophosphatase of Saccharolobus islandicus (strain Y.N.15.51 / Yellowstone #2) (Sulfolobus islandicus).